The primary structure comprises 156 residues: ATP synthase subunit b (156 aa).

Residues 7 to 29 form a helical membrane-spanning segment; the sequence is LLGQAIAFALFVWFCMKYVWPPI.

The protein belongs to the ATPase B chain family. In terms of assembly, F-type ATPases have 2 components, F(1) - the catalytic core - and F(0) - the membrane proton channel. F(1) has five subunits: alpha(3), beta(3), gamma(1), delta(1), epsilon(1). F(0) has three main subunits: a(1), b(2) and c(10-14). The alpha and beta chains form an alternating ring which encloses part of the gamma chain. F(1) is attached to F(0) by a central stalk formed by the gamma and epsilon chains, while a peripheral stalk is formed by the delta and b chains.

It is found in the cell inner membrane. Its function is as follows. F(1)F(0) ATP synthase produces ATP from ADP in the presence of a proton or sodium gradient. F-type ATPases consist of two structural domains, F(1) containing the extramembraneous catalytic core and F(0) containing the membrane proton channel, linked together by a central stalk and a peripheral stalk. During catalysis, ATP synthesis in the catalytic domain of F(1) is coupled via a rotary mechanism of the central stalk subunits to proton translocation. In terms of biological role, component of the F(0) channel, it forms part of the peripheral stalk, linking F(1) to F(0). In Aliivibrio salmonicida (strain LFI1238) (Vibrio salmonicida (strain LFI1238)), this protein is ATP synthase subunit b.